The primary structure comprises 342 residues: MKQLESFEIPRTVVFGPGAILKIPDIVSGLRVGKVLIISGKSATQQYAKTVASLLSGYSAEILKYDEVELEKSGFDLIIGVGGGRPLDMAKVYSYVHKRPLIVVPTSASHDGIASPYISYILAEKVKRYGKVVASPIAIVADTSIILSAPRRLLRAGVGDLLGKVVAVRDWQLAHRLKGEEYSEYAALLSLSSYRIVVANAGKIGNFVREEDVRALVKALIGCGVAMGIAGSSRPCSGSEHLFAHAIERRLEGAEGEAIHGELVALGAIVMAYLHGINWRRIKKAAGAVGLPTTLKQAGIDLDLAIEALTTAHTLRPDRYTILGDGLSASAARKALEDTELI.

NAD(+)-binding positions include 84 to 88 (GRPLD) and 106 to 109 (TSAS). Asp111 contributes to the substrate binding site. Residue Ser115 coordinates NAD(+). Asp160 provides a ligand contact to substrate. Zn(2+) contacts are provided by Asp160 and His241. His245 contributes to the substrate binding site. His260 contributes to the Zn(2+) binding site.

Belongs to the glycerol-1-phosphate dehydrogenase family. Homodimer. The cofactor is Zn(2+).

Its subcellular location is the cytoplasm. It catalyses the reaction sn-glycerol 1-phosphate + NAD(+) = dihydroxyacetone phosphate + NADH + H(+). The enzyme catalyses sn-glycerol 1-phosphate + NADP(+) = dihydroxyacetone phosphate + NADPH + H(+). Its pathway is membrane lipid metabolism; glycerophospholipid metabolism. In terms of biological role, catalyzes the NAD(P)H-dependent reduction of dihydroxyacetonephosphate (DHAP or glycerone phosphate) to glycerol 1-phosphate (G1P). The G1P thus generated is used as the glycerophosphate backbone of phospholipids in the cellular membranes of Archaea. The chain is Glycerol-1-phosphate dehydrogenase [NAD(P)+] from Pyrobaculum neutrophilum (strain DSM 2338 / JCM 9278 / NBRC 100436 / V24Sta) (Thermoproteus neutrophilus).